The primary structure comprises 87 residues: Small ribosomal subunit protein uS15 (87 aa).

This sequence belongs to the universal ribosomal protein uS15 family. As to quaternary structure, part of the 30S ribosomal subunit. Forms a bridge to the 50S subunit in the 70S ribosome, contacting the 23S rRNA.

Functionally, one of the primary rRNA binding proteins, it binds directly to 16S rRNA where it helps nucleate assembly of the platform of the 30S subunit by binding and bridging several RNA helices of the 16S rRNA. Its function is as follows. Forms an intersubunit bridge (bridge B4) with the 23S rRNA of the 50S subunit in the ribosome. The chain is Small ribosomal subunit protein uS15 from Dehalococcoides mccartyi (strain ATCC BAA-2100 / JCM 16839 / KCTC 5957 / BAV1).